We begin with the raw amino-acid sequence, 484 residues long: tRNA sulfurtransferase (484 aa).

The THUMP domain maps to 63 to 167; the sequence is EAFGERLACI…NEQLYLVDKR (105 aa). ATP is bound by residues 185 to 186, Lys267, Gly289, and Gln298; that span reads LI. Cysteines 346 and 458 form a disulfide. One can recognise a Rhodanese domain in the interval 406–484; sequence ISADEVIIDV…GYSNVKVYRP (79 aa). Cys458 acts as the Cysteine persulfide intermediate in catalysis.

This sequence belongs to the ThiI family.

The protein resides in the cytoplasm. It carries out the reaction [ThiI sulfur-carrier protein]-S-sulfanyl-L-cysteine + a uridine in tRNA + 2 reduced [2Fe-2S]-[ferredoxin] + ATP + H(+) = [ThiI sulfur-carrier protein]-L-cysteine + a 4-thiouridine in tRNA + 2 oxidized [2Fe-2S]-[ferredoxin] + AMP + diphosphate. The enzyme catalyses [ThiS sulfur-carrier protein]-C-terminal Gly-Gly-AMP + S-sulfanyl-L-cysteinyl-[cysteine desulfurase] + AH2 = [ThiS sulfur-carrier protein]-C-terminal-Gly-aminoethanethioate + L-cysteinyl-[cysteine desulfurase] + A + AMP + 2 H(+). Its pathway is cofactor biosynthesis; thiamine diphosphate biosynthesis. In terms of biological role, catalyzes the ATP-dependent transfer of a sulfur to tRNA to produce 4-thiouridine in position 8 of tRNAs, which functions as a near-UV photosensor. Also catalyzes the transfer of sulfur to the sulfur carrier protein ThiS, forming ThiS-thiocarboxylate. This is a step in the synthesis of thiazole, in the thiamine biosynthesis pathway. The sulfur is donated as persulfide by IscS. In Shewanella piezotolerans (strain WP3 / JCM 13877), this protein is tRNA sulfurtransferase.